The sequence spans 800 residues: DNA topoisomerase 4 subunit A (800 aa).

Positions 31-495 constitute a Topo IIA-type catalytic domain; that stretch reads LPDVRDGLKP…EIEEIKIDKE (465 aa). Residue Y119 is the O-(5'-phospho-DNA)-tyrosine intermediate of the active site.

Belongs to the type II topoisomerase GyrA/ParC subunit family. ParC type 2 subfamily. As to quaternary structure, heterotetramer composed of ParC and ParE.

It localises to the cell membrane. It carries out the reaction ATP-dependent breakage, passage and rejoining of double-stranded DNA.. Functionally, topoisomerase IV is essential for chromosome segregation. It relaxes supercoiled DNA. Performs the decatenation events required during the replication of a circular DNA molecule. The sequence is that of DNA topoisomerase 4 subunit A from Staphylococcus aureus (strain Mu50 / ATCC 700699).